The chain runs to 259 residues: Potassium/proton antiporter CemA (259 aa).

4 helical membrane passes run 47-67 (CLLV…EPWV), 136-156 (IITH…YLVM), 184-204 (ILLA…ELLI), and 219-239 (IISS…KYWI).

This sequence belongs to the CemA family.

It localises to the plastid. Its subcellular location is the chloroplast inner membrane. It carries out the reaction K(+)(in) + H(+)(out) = K(+)(out) + H(+)(in). Functionally, contributes to K(+)/H(+) antiport activity by supporting proton efflux to control proton extrusion and homeostasis in chloroplasts in a light-dependent manner to modulate photosynthesis. Prevents excessive induction of non-photochemical quenching (NPQ) under continuous-light conditions. Indirectly promotes efficient inorganic carbon uptake into chloroplasts. This Welwitschia mirabilis (Tree tumbo) protein is Potassium/proton antiporter CemA.